A 438-amino-acid polypeptide reads, in one-letter code: V-type ATP synthase beta chain (438 aa).

Belongs to the ATPase alpha/beta chains family.

In terms of biological role, produces ATP from ADP in the presence of a proton gradient across the membrane. The V-type beta chain is a regulatory subunit. This chain is V-type ATP synthase beta chain (atpB), found in Chlamydia muridarum (strain MoPn / Nigg).